The chain runs to 280 residues: Truncated lectin 2 (280 aa).

Residues 1 to 26 (MSSSNFSCILSISLTFFILLLNKVNS) form the signal peptide. Glu148 and Asp150 together coordinate Mn(2+). Ca(2+) is bound by residues Asp150, Phe152, Asn154, and Asp158. Residue Asp158 participates in Mn(2+) binding. Asn163 carries N-linked (GlcNAc...) asparagine glycosylation. His170 contacts Mn(2+). Asn272 carries N-linked (GlcNAc...) asparagine glycosylation.

It belongs to the leguminous lectin family.

The polypeptide is Truncated lectin 2 (LEC2) (Medicago truncatula (Barrel medic)).